A 97-amino-acid chain; its full sequence is Co-chaperonin GroES (97 aa).

This sequence belongs to the GroES chaperonin family. In terms of assembly, heptamer of 7 subunits arranged in a ring. Interacts with the chaperonin GroEL.

It is found in the cytoplasm. In terms of biological role, together with the chaperonin GroEL, plays an essential role in assisting protein folding. The GroEL-GroES system forms a nano-cage that allows encapsulation of the non-native substrate proteins and provides a physical environment optimized to promote and accelerate protein folding. GroES binds to the apical surface of the GroEL ring, thereby capping the opening of the GroEL channel. This chain is Co-chaperonin GroES, found in Symbiobacterium thermophilum (strain DSM 24528 / JCM 14929 / IAM 14863 / T).